The primary structure comprises 984 residues: Glycine dehydrogenase (decarboxylating) (984 aa).

The residue at position 702 (lysine 702) is an N6-(pyridoxal phosphate)lysine.

Belongs to the GcvP family. As to quaternary structure, the glycine cleavage system is composed of four proteins: P, T, L and H. Pyridoxal 5'-phosphate serves as cofactor.

It carries out the reaction N(6)-[(R)-lipoyl]-L-lysyl-[glycine-cleavage complex H protein] + glycine + H(+) = N(6)-[(R)-S(8)-aminomethyldihydrolipoyl]-L-lysyl-[glycine-cleavage complex H protein] + CO2. Its function is as follows. The glycine cleavage system catalyzes the degradation of glycine. The P protein binds the alpha-amino group of glycine through its pyridoxal phosphate cofactor; CO(2) is released and the remaining methylamine moiety is then transferred to the lipoamide cofactor of the H protein. The polypeptide is Glycine dehydrogenase (decarboxylating) (Xanthomonas oryzae pv. oryzae (strain MAFF 311018)).